The chain runs to 307 residues: Beta-lactamase (307 aa).

The N-terminal stretch at 1-26 (MKLWFSTLKLKKAAAVLLFSCVALAG) is a signal peptide. C27 carries the N-palmitoyl cysteine lipid modification. The S-diacylglycerol cysteine moiety is linked to residue C27. The active-site Acyl-ester intermediate is S86. The active-site Proton acceptor is the E182. 248–250 (KTG) contributes to the substrate binding site.

The protein belongs to the class-A beta-lactamase family. Post-translationally, large exopenicillinase is the primary secretion product; it can be converted to small exopenicillinase.

The protein localises to the cell membrane. The enzyme catalyses a beta-lactam + H2O = a substituted beta-amino acid. This is Beta-lactamase (penP) from Bacillus licheniformis.